A 419-amino-acid polypeptide reads, in one-letter code: Protein distal antenna-related (419 aa).

In terms of domain architecture, HTH psq-type spans 15–66 (TRGKRPLRNLTPNDKVRAIQRIHNGETKASVSRDIGVPESTLRGWCKNEQKL). The segment at residues 42 to 62 (KASVSRDIGVPESTLRGWCKN) is a DNA-binding region (H-T-H motif). Disordered regions lie at residues 333-359 (QPGGGGPGGPSYNPNQMASGGSEPDLE) and 378-419 (EASN…DAEQ).

Interacts with itself, dan, ey and dac to form a complex (or complexes) containing the RD factors. In terms of tissue distribution, coexpressed with dan in the presumptive distal antenna, but not in the leg imaginal disk. Both proteins are also expressed in the brain and the eye region of the eye-antenna disk. First detected in early L3 eye disks in cells surrounding the newly initiated morphogenetic furrow. Highly expressed in evenly spaced clusters of cells anterior to the furrow, lower levels within and posterior to the furrow.

It localises to the nucleus. In terms of biological role, probable transcription factor with a role in the retinal determination (RD) network. Regulates ato expression and is required for normal R8 induction and differentiation. Danr appears to repress Dan expression, but Dan is required for Danr expression anterior to the morphogenetic furrow (MF). Dan and Danr lie downstream of so and require dac function for highest levels of expression. Contributes to differentiation of antenna-specific characteristics; effector gene that acts downstream of homothorax (hth), Distal-less (Dll), cut (ct) and spineless (ss) genes to control differentiation of distal antennal structures. The chain is Protein distal antenna-related from Drosophila melanogaster (Fruit fly).